Consider the following 103-residue polypeptide: Large ribosomal subunit protein bL28 (103 aa).

The protein belongs to the bacterial ribosomal protein bL28 family.

This chain is Large ribosomal subunit protein bL28, found in Anaplasma marginale (strain St. Maries).